Reading from the N-terminus, the 151-residue chain is MSKTYLPPQESLERDWYVVDATDKRLGRLASEIAMILRGKNKAHYTPHLDTGDFVIVVNAEKVAVTGKKRTQKLYRRHSGRPGGMKTETFAKLQQRLPERIVEHAVKGMLPKNSLGKQLFTKLKVYAGPTHPHDAQKPKELNINTIPGAES.

Positions 129–151 (PTHPHDAQKPKELNINTIPGAES) are disordered. Residues 131–140 (HPHDAQKPKE) show a composition bias toward basic and acidic residues.

Belongs to the universal ribosomal protein uL13 family. Part of the 50S ribosomal subunit.

In terms of biological role, this protein is one of the early assembly proteins of the 50S ribosomal subunit, although it is not seen to bind rRNA by itself. It is important during the early stages of 50S assembly. The sequence is that of Large ribosomal subunit protein uL13 from Trichormus variabilis (strain ATCC 29413 / PCC 7937) (Anabaena variabilis).